The sequence spans 282 residues: 5'-adenylylsulfate reductase-like 2 (282 aa).

The N-terminal stretch at 1–19 (MRWWPALPLLLLAVAVAGA) is a signal peptide. Positions 20–159 (GDAAPVCTRP…LAAFYNDVSG (140 aa)) constitute a Thioredoxin domain. Asn-134 carries N-linked (GlcNAc...) asparagine glycosylation. A helical membrane pass occupies residues 205–225 (AASFVILRLLYLFYPKITAFV).

It is found in the membrane. This is 5'-adenylylsulfate reductase-like 2 (APRL2) from Oryza sativa subsp. japonica (Rice).